Reading from the N-terminus, the 94-residue chain is Large ribosomal subunit protein bL25 (94 aa).

It belongs to the bacterial ribosomal protein bL25 family. In terms of assembly, part of the 50S ribosomal subunit; part of the 5S rRNA/L5/L18/L25 subcomplex. Contacts the 5S rRNA. Binds to the 5S rRNA independently of L5 and L18.

Functionally, this is one of the proteins that binds to the 5S RNA in the ribosome where it forms part of the central protuberance. The protein is Large ribosomal subunit protein bL25 of Serratia proteamaculans (strain 568).